Consider the following 77-residue polypeptide: Rhodotorucin-A peptides type 2 (77 aa).

Positions Met-1–Ala-3 are excised as a propeptide. Residue Cys-14 is the site of S-farnesyl cysteine attachment. Residues Thr-15–Lys-18 constitute a propeptide that is removed on maturation. Cys-29 carries the S-farnesyl cysteine lipid modification. Positions Thr-30–Lys-33 are excised as a propeptide. The S-farnesyl cysteine moiety is linked to residue Cys-44. Residues Thr-45 to Lys-48 constitute a propeptide that is removed on maturation. Cys-59 carries the S-farnesyl cysteine lipid modification. A propeptide spanning residues Thr-60 to Lys-63 is cleaved from the precursor. Cys-74 is lipidated: S-farnesyl cysteine. Positions Thr-75–Ala-77 are excised as a propeptide.

The protein localises to the cell membrane. Its function is as follows. Rhodotorucin-A is a mating pheromone in cells of mating type A of Rhodosporidium toruloides. The chain is Rhodotorucin-A peptides type 2 (RHA2) from Rhodotorula toruloides (Yeast).